We begin with the raw amino-acid sequence, 684 residues long: Frizzled-8 (684 aa).

The signal sequence occupies residues 1-27; sequence MEWGYLLEVTSLLAALAVLQRSSGAAA. Residues 28–271 are Extracellular-facing; the sequence is ASAKELACQE…NPFFSQDERA (244 aa). Residues 30 to 151 form the FZ domain; the sequence is AKELACQEIT…GNPDTLCMDY (122 aa). Cystine bridges form between Cys-35–Cys-96, Cys-43–Cys-89, Cys-80–Cys-118, Cys-107–Cys-148, and Cys-111–Cys-135. Residue Asn-49 is glycosylated (N-linked (GlcNAc...) asparagine). Hexadecanoate is bound at residue 71-78; the sequence is QFWPLVEI. The interval 95–100 is wnt-binding; sequence ICLEDY. The wnt-binding stretch occupies residues 147–152; sequence LCMDYN. Asn-152 carries N-linked (GlcNAc...) asparagine glycosylation. Residues 155–222 form a disordered region; it reads DLTTAAPSPP…KARPPGGGAA (68 aa). Positions 161 to 175 are enriched in pro residues; the sequence is PSPPRRLPPPQPGEQ. Composition is skewed to low complexity over residues 176–186 and 199–222; these read PPSGSGHSRPP and GSGDTAAAPPSRGGKARPPGGGAA. A helical membrane pass occupies residues 272 to 292; the sequence is FTVFWIGLWSVLCFVSTFATV. Residues 293 to 308 are Cytoplasmic-facing; it reads STFLIDMERFKYPERP. The helical transmembrane segment at 309 to 329 threads the bilayer; that stretch reads IIFLSACYLFVSVGYLVRLVA. The Extracellular segment spans residues 330–393; that stretch reads GHEKVACSGG…RYETTGPALC (64 aa). The chain crosses the membrane as a helical span at residues 394–414; it reads TVVFLLVYFFGMASSIWWVIL. Residues 415 to 436 lie on the Cytoplasmic side of the membrane; the sequence is SLTWFLAAGMKWGNEAIAGYSQ. The chain crosses the membrane as a helical span at residues 437–457; sequence YFHLAAWLVPSVKSIAVLALS. The Extracellular portion of the chain corresponds to 458–480; the sequence is SVDGDPVAGICYVGNQSLDNLRG. Asn-472 carries an N-linked (GlcNAc...) asparagine glycan. Residues 481–501 form a helical membrane-spanning segment; the sequence is FVLAPLVIYLFIGTMFLLAGF. The Cytoplasmic segment spans residues 502–529; that stretch reads VSLFRIRSVIKQQGGPTKTHKLEKLMIR. A helical transmembrane segment spans residues 530–550; that stretch reads LGLFTVLYTVPAAVVVACLFY. The Extracellular segment spans residues 551-581; the sequence is EQHNRPRWEATHNCPCLRDLQPDQARRPDYA. Residues 582-602 form a helical membrane-spanning segment; it reads VFMLKYFMCLVVGITSGVWVW. The Cytoplasmic segment spans residues 603 to 684; it reads SGKTLESWRA…YPKQMPLSQV (82 aa). Positions 605–610 match the Lys-Thr-X-X-X-Trp motif, mediates interaction with the PDZ domain of Dvl family members motif; sequence KTLESW. Residues 630 to 654 are compositionally biased toward gly residues; that stretch reads AGGSGPGGGGPGPGGGGGHGGGGGS. Residues 630–655 are disordered; sequence AGGSGPGGGGPGPGGGGGHGGGGGSL. The PDZ-binding motif lies at 682 to 684; that stretch reads SQV.

It belongs to the G-protein coupled receptor Fz/Smo family. Component of a Wnt-signaling complex that contains a WNT protein, a FZD protein and LRP5 or LRP6. Interacts directly with LRP5 or LRP6; the interaction is promoted by Wnt-binding and signaling and inhibited by DKK1. Interacts (via the PDZ-binding motif) with GPOC (via its PDZ domain). Interacts with RSPO1 and RSPO3. Interacts with glypican GPC3. In terms of processing, ubiquitinated by ZNRF3, leading to its degradation by the proteasome.

The protein localises to the membrane. It is found in the golgi apparatus. Its subcellular location is the cell membrane. Functionally, receptor for Wnt proteins. Component of the Wnt-Fzd-LRP5-LRP6 complex that triggers beta-catenin signaling through inducing aggregation of receptor-ligand complexes into ribosome-sized signalosomes. The beta-catenin canonical signaling pathway leads to the activation of disheveled proteins, inhibition of GSK-3 kinase, nuclear accumulation of beta-catenin and activation of Wnt target genes. A second signaling pathway involving PKC and calcium fluxes has been seen for some family members, but it is not yet clear if it represents a distinct pathway or if it can be integrated in the canonical pathway, as PKC seems to be required for Wnt-mediated inactivation of GSK-3 kinase. Both pathways seem to involve interactions with G-proteins. May be involved in transduction and intercellular transmission of polarity information during tissue morphogenesis and/or in differentiated tissues. Coreceptor along with RYK of Wnt proteins, such as WNT1. This is Frizzled-8 (Fzd8) from Rattus norvegicus (Rat).